The chain runs to 437 residues: Sulfite reductase, dissimilatory-type subunit alpha (437 aa).

Cysteine 177, cysteine 183, cysteine 221, cysteine 225, cysteine 284, cysteine 303, cysteine 306, and cysteine 309 together coordinate [4Fe-4S] cluster. Residues 294-322 (SKLSIDNKECVRCMHCINTMPRALHIGDE) form the 4Fe-4S ferredoxin-type domain.

As to quaternary structure, heterohexamer of two alpha, two beta and two gamma subunits.

Its function is as follows. Part of the complex that catalyzes the reduction of sulfite to sulfide. The alpha and beta subunits may have arisen by gene duplication. They both bind 2 iron-sulfur clusters, but the alpha subunit seems to be catalytically inactive, due to substitutions along the putative substrate access channel, and because it binds sirohydrochlorin (the dematallated form of siroheme) instead of siroheme. The sequence is that of Sulfite reductase, dissimilatory-type subunit alpha (dsvA) from Nitratidesulfovibrio vulgaris (strain ATCC 29579 / DSM 644 / CCUG 34227 / NCIMB 8303 / VKM B-1760 / Hildenborough) (Desulfovibrio vulgaris).